The sequence spans 215 residues: MTQAITVEESRELDDKTINKIGIPSLVLMERAGLKIYENMLDNKDLDLSNVLILAGTGNNGGDGLVVARLLATHGYQVSILTVGNPDHASEDHLAQARICNYYQIPKVFMNADFNKFTTLVDALFGSGLSRNVGGDFATIIDKANASTAKIHAIDIPSGLNGDTGDVMGTAIKAISTSTVAYPKVGMLKDQAKPYTGKIYVDDIGIYRGNAFENE.

Positions 10-212 constitute a YjeF N-terminal domain; sequence SRELDDKTIN…DIGIYRGNAF (203 aa). 59–63 is a (6S)-NADPHX binding site; sequence NNGGD. K(+)-binding residues include Asn60 and Asp122. Residues 126–132 and Asp155 contribute to the (6S)-NADPHX site; that span reads GSGLSRN. Ser158 contacts K(+).

Belongs to the NnrE/AIBP family. It depends on K(+) as a cofactor.

It carries out the reaction (6R)-NADHX = (6S)-NADHX. It catalyses the reaction (6R)-NADPHX = (6S)-NADPHX. Its function is as follows. Catalyzes the epimerization of the S- and R-forms of NAD(P)HX, a damaged form of NAD(P)H that is a result of enzymatic or heat-dependent hydration. This is a prerequisite for the S-specific NAD(P)H-hydrate dehydratase to allow the repair of both epimers of NAD(P)HX. This is NAD(P)H-hydrate epimerase from Lentilactobacillus buchneri (strain NRRL B-30929) (Lactobacillus buchneri).